A 176-amino-acid polypeptide reads, in one-letter code: Adenine phosphoribosyltransferase (176 aa).

Belongs to the purine/pyrimidine phosphoribosyltransferase family. As to quaternary structure, homodimer.

It is found in the cytoplasm. The enzyme catalyses AMP + diphosphate = 5-phospho-alpha-D-ribose 1-diphosphate + adenine. Its pathway is purine metabolism; AMP biosynthesis via salvage pathway; AMP from adenine: step 1/1. In terms of biological role, catalyzes a salvage reaction resulting in the formation of AMP, that is energically less costly than de novo synthesis. The sequence is that of Adenine phosphoribosyltransferase from Thermobifida fusca (strain YX).